We begin with the raw amino-acid sequence, 418 residues long: MAP kinase-interacting serine/threonine-protein kinase 1 (418 aa).

Positions 1–23 are disordered; it reads MVSSQPVPFDDGGKRRKKKRKTR. A Protein kinase domain is found at 37 to 321; the sequence is RLTDELLGEG…AFQVLQHPWL (285 aa). Residues 43–51 and lysine 66 each bind ATP; that span reads LGEGAYAKV. The active-site Proton acceptor is aspartate 158. The disordered stretch occupies residues 384–418; the sequence is PPSKSRLAKRRAQAHARKGGSHPTHSTVTASQGTP. The span at 389 to 403 shows a compositional bias: basic residues; sequence RLAKRRAQAHARKGG. Residues 406–418 are compositionally biased toward polar residues; it reads PTHSTVTASQGTP.

Belongs to the protein kinase superfamily. CAMK Ser/Thr protein kinase family. It depends on Mg(2+) as a cofactor.

The enzyme catalyses L-seryl-[protein] + ATP = O-phospho-L-seryl-[protein] + ADP + H(+). It carries out the reaction L-threonyl-[protein] + ATP = O-phospho-L-threonyl-[protein] + ADP + H(+). May play a role in the response to environmental stress and cytokines. Appears to regulate translation by phosphorylating EIF4E, thus increasing the affinity of this protein for the 7-methylguanosine-containing mRNA cap. The chain is MAP kinase-interacting serine/threonine-protein kinase 1 (mknk1) from Xenopus laevis (African clawed frog).